The following is a 252-amino-acid chain: 2-succinyl-6-hydroxy-2,4-cyclohexadiene-1-carboxylate synthase (252 aa).

The protein belongs to the AB hydrolase superfamily. MenH family. As to quaternary structure, monomer.

The enzyme catalyses 5-enolpyruvoyl-6-hydroxy-2-succinyl-cyclohex-3-ene-1-carboxylate = (1R,6R)-6-hydroxy-2-succinyl-cyclohexa-2,4-diene-1-carboxylate + pyruvate. The protein operates within quinol/quinone metabolism; 1,4-dihydroxy-2-naphthoate biosynthesis; 1,4-dihydroxy-2-naphthoate from chorismate: step 3/7. Its pathway is quinol/quinone metabolism; menaquinone biosynthesis. Its function is as follows. Catalyzes a proton abstraction reaction that results in 2,5-elimination of pyruvate from 2-succinyl-5-enolpyruvyl-6-hydroxy-3-cyclohexene-1-carboxylate (SEPHCHC) and the formation of 2-succinyl-6-hydroxy-2,4-cyclohexadiene-1-carboxylate (SHCHC). The sequence is that of 2-succinyl-6-hydroxy-2,4-cyclohexadiene-1-carboxylate synthase from Shigella flexneri serotype 5b (strain 8401).